A 156-amino-acid chain; its full sequence is MPRKGPAPRRPLVADPVYNSPLVTQLVNKILLRGKRQLAETLVYAALEGCREKSGTDPVVTLKRAMDNVKPTLEVRSRRVGGATYQVPVEVRPARATTLGLRWLVTYARARREKTMVERLMNELLDASNGLGAAVKRREDTHKMAESNKAFAHYRW.

The protein belongs to the universal ribosomal protein uS7 family. In terms of assembly, part of the 30S ribosomal subunit. Contacts proteins S9 and S11.

One of the primary rRNA binding proteins, it binds directly to 16S rRNA where it nucleates assembly of the head domain of the 30S subunit. Is located at the subunit interface close to the decoding center, probably blocks exit of the E-site tRNA. The polypeptide is Small ribosomal subunit protein uS7 (Salinispora tropica (strain ATCC BAA-916 / DSM 44818 / JCM 13857 / NBRC 105044 / CNB-440)).